Here is a 546-residue protein sequence, read N- to C-terminus: Glucose-6-phosphate isomerase (546 aa).

The active-site Proton donor is the Glu353. Catalysis depends on residues His384 and Lys512.

It belongs to the GPI family.

It localises to the cytoplasm. It catalyses the reaction alpha-D-glucose 6-phosphate = beta-D-fructose 6-phosphate. It participates in carbohydrate biosynthesis; gluconeogenesis. It functions in the pathway carbohydrate degradation; glycolysis; D-glyceraldehyde 3-phosphate and glycerone phosphate from D-glucose: step 2/4. In terms of biological role, catalyzes the reversible isomerization of glucose-6-phosphate to fructose-6-phosphate. The chain is Glucose-6-phosphate isomerase from Actinobacillus pleuropneumoniae serotype 3 (strain JL03).